The primary structure comprises 356 residues: 3-dehydroquinate synthase (356 aa).

Residues 101–105 (GVIGD), 125–126 (TT), Lys138, and Lys147 each bind NAD(+). Residues Glu180, His243, and His260 each contribute to the Zn(2+) site.

The protein belongs to the sugar phosphate cyclases superfamily. Dehydroquinate synthase family. Co(2+) is required as a cofactor. Zn(2+) serves as cofactor. It depends on NAD(+) as a cofactor.

The protein localises to the cytoplasm. The enzyme catalyses 7-phospho-2-dehydro-3-deoxy-D-arabino-heptonate = 3-dehydroquinate + phosphate. The protein operates within metabolic intermediate biosynthesis; chorismate biosynthesis; chorismate from D-erythrose 4-phosphate and phosphoenolpyruvate: step 2/7. Its function is as follows. Catalyzes the conversion of 3-deoxy-D-arabino-heptulosonate 7-phosphate (DAHP) to dehydroquinate (DHQ). The polypeptide is 3-dehydroquinate synthase (Alkaliphilus metalliredigens (strain QYMF)).